Consider the following 855-residue polypeptide: E3 ubiquitin-protein ligase TRIM71 (855 aa).

Ala-2 carries the post-translational modification N-acetylalanine. The RING-type zinc finger occupies 12–94; sequence CLLCKEMCGS…ALKLRCPVCD (83 aa). Positions 26-42 are enriched in low complexity; the sequence is SSNSSASSSSSQTSTSS. Disordered stretches follow at residues 26–48 and 127–177; these read SSNSSASSSSSQTSTSSAGGGGP and EEPP…SPGS. Over residues 135 to 145 the composition is skewed to gly residues; sequence RAGGGPGGAGG. Positions 147-157 are enriched in basic residues; the sequence is SNHRHHAHHPA. The B box-type 1; atypical zinc finger occupies 181 to 228; it reads RRPHGCSSCDEGNAASSRCLDCQEHLCDNCVRAHQRVRLTKDHYIERG. Residues 260–301 form a B box-type 2 zinc finger; that stretch reads ERLGFCQHHDDEVLHLYCDTCSVPICRECTLGRHGGHSFAYL. Zn(2+)-binding residues include Cys-265, His-268, Cys-288, and His-293. Coiled-coil stretches lie at residues 314–352 and 378–411; these read QLLADAQQGRQALQLSIEQAQTVAEQVEMKAKVVQSEVK and QVKAKSLFLQVEKLRQSLSKLESTISAVQQVLEE. The Filamin repeat unit spans residues 466-567; the sequence is SSGAFAPLTK…IENSPFKVVV (102 aa). NHL repeat units follow at residues 580-623, 627-670, 674-717, 721-764, 768-811, and 815-855; these read GLSF…FKPC, HHKF…FTFE, LLKF…FGPD, LNKY…IHPD, ARFL…FEAN, and LCKF…ILIF.

The protein belongs to the TRIM/RBCC family. In terms of assembly, interacts (via NHL repeats) with AGO2; the interaction increases in presence of RNA. Interacts with HSP90AA1. Interacts (via NHL repeats) with MOV10, PABPC1, PUM1, PUM2, STAU2, XRN1 and XRN2 in an RNA-dependent manner. Interacts with SHCBP1; leading to enhance its stability. In terms of processing, autoubiquitinated. In terms of tissue distribution, highly expressed in undifferentiated embryonic stem cells (ESCs). Expressed in the epiblast and in interfollicular epidermal stem cells during early development. Also expressed in male germ cells and in the reproductive tract. Highly expressed in neuroepithelial cells, and its expression declines as neurogenesis proceeds (at protein level). Expressed in ependymal cells of the brain.

Its subcellular location is the cytoplasm. The protein resides in the P-body. The catalysed reaction is S-ubiquitinyl-[E2 ubiquitin-conjugating enzyme]-L-cysteine + [acceptor protein]-L-lysine = [E2 ubiquitin-conjugating enzyme]-L-cysteine + N(6)-ubiquitinyl-[acceptor protein]-L-lysine.. It functions in the pathway protein modification; protein ubiquitination. E3 ubiquitin-protein ligase that cooperates with the microRNAs (miRNAs) machinery and promotes embryonic stem cells proliferation and maintenance. Binds to miRNAs and associates with AGO2, participating in post-transcriptional repression of transcripts such as CDKN1A. Facilitates the G1-S transition to promote rapid embryonic stem cell self-renewal by repressing CDKN1A expression. In addition, participates in post-transcriptional mRNA repression in a miRNA independent mechanism. Required to maintain proliferation and prevent premature differentiation of neural progenitor cells during early neural development: positively regulates FGF signaling by controlling the stability of SHCBP1. Specific regulator of miRNA biogenesis. miRNA Binds MIR29A hairpin and postranscriptionally modulates MIR29A levels, which indirectly regulates TET proteins expression. The sequence is that of E3 ubiquitin-protein ligase TRIM71 (Trim71) from Mus musculus (Mouse).